The primary structure comprises 170 residues: MAVVISIHRPYVTLTISKNRNPLKPHRQFNESCLRFDHLPRNTKNQLRCLSAKSTPSKPDPASPQDGEELESVGVKAALAMLRFYKREISPVLPRSCRYVPTCSEYSMEAYKKYGVLKGTVLTTWRLCRCNPLGGSGFDPPRWFGESGIKLREGDEEEEDNYDDEDQRKI.

Disordered stretches follow at residues 49–70 (CLSA…GEEL) and 147–170 (SGIK…QRKI). A compositionally biased stretch (acidic residues) spans 154–170 (GDEEEEDNYDDEDQRKI).

It belongs to the UPF0161 family.

In Arabidopsis thaliana (Mouse-ear cress), this protein is UPF0161 protein At3g09310.